Consider the following 87-residue polypeptide: Dynein light chain 1, cytoplasmic (87 aa).

It belongs to the dynein light chain family. Homodimer. Cytoplasmic dynein consists of two catalytic heavy chains (HCs) and a number of non-catalytic subunits which present intermediate chains (ICs), light intermediate chains (LICs) and light chains (LCs). Component of the nuclear pore complex (NPC). NPC constitutes the exclusive means of nucleocytoplasmic transport. NPCs allow the passive diffusion of ions and small molecules and the active, nuclear transport receptor-mediated bidirectional transport of macromolecules such as proteins, RNAs, ribonucleoparticles (RNPs), and ribosomal subunits across the nuclear envelope. Due to its 8-fold rotational symmetry, all subunits are present with 8 copies or multiples thereof.

It is found in the cytoplasm. Its subcellular location is the cytoskeleton. It localises to the nucleus. The protein localises to the nuclear pore complex. Its function is as follows. Acts as one of several non-catalytic accessory components of the cytoplasmic dynein complex that are thought to be involved in linking dynein to cargos and to adapter proteins that regulate dynein function. Cytoplasmic dynein 1 acts as a motor for the intracellular retrograde motility of vesicles and organelles along microtubules. May play a role in changing or maintaining the spatial distribution of cytoskeletal structures. Also a component of the nuclear pore complex. The chain is Dynein light chain 1, cytoplasmic (DYN2) from Kluyveromyces lactis (strain ATCC 8585 / CBS 2359 / DSM 70799 / NBRC 1267 / NRRL Y-1140 / WM37) (Yeast).